The following is a 90-amino-acid chain: [Leu8]-phyllolitorin (90 aa).

Residues 1–30 (MSAVPFTRVLLISGFLAHLLLSTFVTLTVC) form the signal peptide. The propeptide occupies 31–48 (KEVTEESDDLSKRNVLQR). Gln49 carries the pyrrolidone carboxylic acid modification. Met57 carries the methionine amide modification. Positions 61–90 (SLENTNRRSDEDMEISALFRGSPLKVKRSD) are excised as a propeptide.

This sequence belongs to the bombesin/neuromedin-B/ranatensin family. As to expression, expressed by the skin glands.

It localises to the secreted. The protein is [Leu8]-phyllolitorin of Phyllomedusa sauvagei (Sauvage's leaf frog).